A 264-amino-acid chain; its full sequence is Virulence plasmid ParA family protein pGP5-D (264 aa).

Residue 9 to 16 (FKGGTGKT) coordinates ATP.

The protein belongs to the ParA family.

Its function is as follows. Required for growth within mammalian cells. This is Virulence plasmid ParA family protein pGP5-D from Chlamydia trachomatis.